The following is a 417-amino-acid chain: Probable pectate lyase 20 (417 aa).

The N-terminal stretch at 1–25 (MAVTQILVVFASALLLSMFFTGVDS) is a signal peptide. Asparagine 29 and asparagine 53 each carry an N-linked (GlcNAc...) asparagine glycan. Ca(2+) is bound by residues aspartate 215, aspartate 239, and aspartate 243. Arginine 295 is a catalytic residue.

Belongs to the polysaccharide lyase 1 family. The cofactor is Ca(2+).

The catalysed reaction is Eliminative cleavage of (1-&gt;4)-alpha-D-galacturonan to give oligosaccharides with 4-deoxy-alpha-D-galact-4-enuronosyl groups at their non-reducing ends.. Its pathway is glycan metabolism; pectin degradation; 2-dehydro-3-deoxy-D-gluconate from pectin: step 2/5. The chain is Probable pectate lyase 20 from Arabidopsis thaliana (Mouse-ear cress).